The chain runs to 316 residues: Methionyl-tRNA formyltransferase (316 aa).

Position 112–115 (112–115 (SLLP)) interacts with (6S)-5,6,7,8-tetrahydrofolate.

The protein belongs to the Fmt family.

The catalysed reaction is L-methionyl-tRNA(fMet) + (6R)-10-formyltetrahydrofolate = N-formyl-L-methionyl-tRNA(fMet) + (6S)-5,6,7,8-tetrahydrofolate + H(+). Functionally, attaches a formyl group to the free amino group of methionyl-tRNA(fMet). The formyl group appears to play a dual role in the initiator identity of N-formylmethionyl-tRNA by promoting its recognition by IF2 and preventing the misappropriation of this tRNA by the elongation apparatus. In Glaesserella parasuis serovar 5 (strain SH0165) (Haemophilus parasuis), this protein is Methionyl-tRNA formyltransferase.